The following is an 804-amino-acid chain: Leucine--tRNA ligase (804 aa).

Residues 40–51 (PYPSGAGLHVGH) carry the 'HIGH' region motif. The short motif at 576 to 580 (KMSKS) is the 'KMSKS' region element. Lys-579 provides a ligand contact to ATP.

The protein belongs to the class-I aminoacyl-tRNA synthetase family.

The protein resides in the cytoplasm. It catalyses the reaction tRNA(Leu) + L-leucine + ATP = L-leucyl-tRNA(Leu) + AMP + diphosphate. This is Leucine--tRNA ligase from Staphylococcus aureus (strain MRSA252).